The following is a 673-amino-acid chain: DNA ligase (673 aa).

Residues Asp33 to Asp37, Ser82 to Leu83, and Glu117 contribute to the NAD(+) site. Catalysis depends on Lys119, which acts as the N6-AMP-lysine intermediate. NAD(+) contacts are provided by Arg140, Glu177, Lys295, and Lys319. Positions 413, 416, 431, and 436 each coordinate Zn(2+). A BRCT domain is found at Ala595–Lys673.

It belongs to the NAD-dependent DNA ligase family. LigA subfamily. Mg(2+) serves as cofactor. Requires Mn(2+) as cofactor.

It carries out the reaction NAD(+) + (deoxyribonucleotide)n-3'-hydroxyl + 5'-phospho-(deoxyribonucleotide)m = (deoxyribonucleotide)n+m + AMP + beta-nicotinamide D-nucleotide.. In terms of biological role, DNA ligase that catalyzes the formation of phosphodiester linkages between 5'-phosphoryl and 3'-hydroxyl groups in double-stranded DNA using NAD as a coenzyme and as the energy source for the reaction. It is essential for DNA replication and repair of damaged DNA. This is DNA ligase from Synechococcus sp. (strain JA-3-3Ab) (Cyanobacteria bacterium Yellowstone A-Prime).